The following is a 124-amino-acid chain: Histone H2A (124 aa).

The span at 1–18 shows a compositional bias: basic residues; sequence MSGRGKGGKAKGKSKSRS. The disordered stretch occupies residues 1–23; the sequence is MSGRGKGGKAKGKSKSRSSRAGL. Residue Ser2 is modified to N-acetylserine. Position 2 is a phosphoserine (Ser2). N5-methylglutamine is present on Gln104.

The protein belongs to the histone H2A family. As to quaternary structure, the nucleosome is a histone octamer containing two molecules each of H2A, H2B, H3 and H4 assembled in one H3-H4 heterotetramer and two H2A-H2B heterodimers. The octamer wraps approximately 147 bp of DNA. In terms of processing, the N-terminal serine is acetylated. That serine is also phosphorylated in approximately 60% of the molecules isolated from erythrocytes.

It localises to the nucleus. The protein localises to the chromosome. Core component of nucleosome. Nucleosomes wrap and compact DNA into chromatin, limiting DNA accessibility to the cellular machineries which require DNA as a template. Histones thereby play a central role in transcription regulation, DNA repair, DNA replication and chromosomal stability. DNA accessibility is regulated via a complex set of post-translational modifications of histones, also called histone code, and nucleosome remodeling. The polypeptide is Histone H2A (Sipunculus nudus (Sipunculan worm)).